The chain runs to 200 residues: ATP-dependent Clp protease proteolytic subunit (200 aa).

The Nucleophile role is filled by serine 96. Residue histidine 121 is part of the active site.

The protein belongs to the peptidase S14 family. Fourteen ClpP subunits assemble into 2 heptameric rings which stack back to back to give a disk-like structure with a central cavity, resembling the structure of eukaryotic proteasomes.

The protein localises to the cytoplasm. The catalysed reaction is Hydrolysis of proteins to small peptides in the presence of ATP and magnesium. alpha-casein is the usual test substrate. In the absence of ATP, only oligopeptides shorter than five residues are hydrolyzed (such as succinyl-Leu-Tyr-|-NHMec, and Leu-Tyr-Leu-|-Tyr-Trp, in which cleavage of the -Tyr-|-Leu- and -Tyr-|-Trp bonds also occurs).. Functionally, cleaves peptides in various proteins in a process that requires ATP hydrolysis. Has a chymotrypsin-like activity. Plays a major role in the degradation of misfolded proteins. This Leuconostoc citreum (strain KM20) protein is ATP-dependent Clp protease proteolytic subunit.